A 1062-amino-acid chain; its full sequence is Exportin-T (1062 aa).

The protein belongs to the exportin family.

Its subcellular location is the nucleus. It is found in the cytoplasm. TRNA nucleus export receptor which facilitates tRNA translocation across the nuclear pore complex. Involved in pre-tRNA splicing, probably by affecting the interaction of pre-tRNA with splicing endonuclease. This is Exportin-T (LOS1) from Vanderwaltozyma polyspora (strain ATCC 22028 / DSM 70294 / BCRC 21397 / CBS 2163 / NBRC 10782 / NRRL Y-8283 / UCD 57-17) (Kluyveromyces polysporus).